Here is a 382-residue protein sequence, read N- to C-terminus: UDP-4-amino-4-deoxy-L-arabinose--oxoglutarate aminotransferase (382 aa).

An N6-(pyridoxal phosphate)lysine modification is found at Lys183.

The protein belongs to the DegT/DnrJ/EryC1 family. ArnB subfamily. In terms of assembly, homodimer. Requires pyridoxal 5'-phosphate as cofactor.

It catalyses the reaction UDP-4-amino-4-deoxy-beta-L-arabinose + 2-oxoglutarate = UDP-beta-L-threo-pentopyranos-4-ulose + L-glutamate. It participates in nucleotide-sugar biosynthesis; UDP-4-deoxy-4-formamido-beta-L-arabinose biosynthesis; UDP-4-deoxy-4-formamido-beta-L-arabinose from UDP-alpha-D-glucuronate: step 2/3. Its pathway is bacterial outer membrane biogenesis; lipopolysaccharide biosynthesis. Its function is as follows. Catalyzes the conversion of UDP-4-keto-arabinose (UDP-Ara4O) to UDP-4-amino-4-deoxy-L-arabinose (UDP-L-Ara4N). The modified arabinose is attached to lipid A and is required for resistance to polymyxin and cationic antimicrobial peptides. In Pseudomonas fluorescens (strain Pf0-1), this protein is UDP-4-amino-4-deoxy-L-arabinose--oxoglutarate aminotransferase.